The following is a 445-amino-acid chain: T-box transcription factor TBX20 (445 aa).

Positions 108-287 form a DNA-binding region, T-box; the sequence is LWDKFHELGT…SNPFAKGFRD (180 aa). The tract at residues 318–337 is disordered; that stretch reads EEDVLGEESQTTQSRGSAFT. The segment covering 325 to 337 has biased composition (polar residues); sequence ESQTTQSRGSAFT.

As to expression, prominently expressed in the extraembryonic mesoderm, developing heart, eye analage and motor neurons of hindbrain and spinal cord. Expressed in extraembryonic tissues such as the amnion and allantois.

It localises to the nucleus. In terms of biological role, acts as a transcriptional activator and repressor required for cardiac development and may have key roles in the maintenance of functional and structural phenotypes in adult heart. The protein is T-box transcription factor TBX20 (Tbx20) of Mus musculus (Mouse).